The chain runs to 349 residues: UDP-N-acetylenolpyruvoylglucosamine reductase (349 aa).

In terms of domain architecture, FAD-binding PCMH-type spans 24-197 (FGIDATARFA…VAVTFRLPKR (174 aa)). The active site involves Arg-173. Ser-249 serves as the catalytic Proton donor. The active site involves Glu-345.

The protein belongs to the MurB family. It depends on FAD as a cofactor.

Its subcellular location is the cytoplasm. The catalysed reaction is UDP-N-acetyl-alpha-D-muramate + NADP(+) = UDP-N-acetyl-3-O-(1-carboxyvinyl)-alpha-D-glucosamine + NADPH + H(+). It participates in cell wall biogenesis; peptidoglycan biosynthesis. Functionally, cell wall formation. The chain is UDP-N-acetylenolpyruvoylglucosamine reductase from Burkholderia ambifaria (strain ATCC BAA-244 / DSM 16087 / CCUG 44356 / LMG 19182 / AMMD) (Burkholderia cepacia (strain AMMD)).